We begin with the raw amino-acid sequence, 435 residues long: Legumain (435 aa).

A signal peptide spans 1 to 17 (MTWRVAVLLSLVLGAGA). N-linked (GlcNAc...) asparagine glycosylation occurs at asparagine 93. Residue histidine 150 is part of the active site. Asparagine 169 carries an N-linked (GlcNAc...) asparagine glycan. The active-site Nucleophile is cysteine 191. 3 N-linked (GlcNAc...) asparagine glycosylation sites follow: asparagine 215, asparagine 265, and asparagine 274. Positions 326–435 (NMKESQVLVG…AMDKVCLSHY (110 aa)) are excised as a propeptide. Disulfide bonds link cysteine 380/cysteine 414 and cysteine 392/cysteine 431.

Belongs to the peptidase C13 family. In terms of assembly, homodimer before autocatalytic removal of the propeptide. Monomer after autocatalytic processing. May interact with integrins. Activated by autocatalytic processing at pH 4. As to expression, detected in kidney cortex (at protein level).

It is found in the lysosome. It carries out the reaction Hydrolysis of proteins and small molecule substrates at -Asn-|-Xaa- bonds.. In terms of biological role, has a strict specificity for hydrolysis of asparaginyl bonds. Can also cleave aspartyl bonds slowly, especially under acidic conditions. Involved in the processing of proteins for MHC class II antigen presentation in the lysosomal/endosomal system. Also involved in MHC class I antigen presentation in cross-presenting dendritic cells by mediating cleavage and maturation of Perforin-2 (MPEG1), thereby promoting antigen translocation in the cytosol. Required for normal lysosomal protein degradation in renal proximal tubules. Required for normal degradation of internalized EGFR. Plays a role in the regulation of cell proliferation via its role in EGFR degradation. This chain is Legumain (Lgmn), found in Rattus norvegicus (Rat).